A 680-amino-acid chain; its full sequence is tRNA 5-methylaminomethyl-2-thiouridine biosynthesis bifunctional protein MnmC (680 aa).

The segment at 1-267 (MTAEPNKPCQ…MAAILSSDAP (267 aa)) is tRNA (mnm(5)s(2)U34)-methyltransferase. The interval 273–680 (IGGGLASAHL…LRKLLKGKAL (408 aa)) is FAD-dependent cmnm(5)s(2)U34 oxidoreductase.

It in the N-terminal section; belongs to the methyltransferase superfamily. tRNA (mnm(5)s(2)U34)-methyltransferase family. This sequence in the C-terminal section; belongs to the DAO family. Requires FAD as cofactor.

It is found in the cytoplasm. It catalyses the reaction 5-aminomethyl-2-thiouridine(34) in tRNA + S-adenosyl-L-methionine = 5-methylaminomethyl-2-thiouridine(34) in tRNA + S-adenosyl-L-homocysteine + H(+). In terms of biological role, catalyzes the last two steps in the biosynthesis of 5-methylaminomethyl-2-thiouridine (mnm(5)s(2)U) at the wobble position (U34) in tRNA. Catalyzes the FAD-dependent demodification of cmnm(5)s(2)U34 to nm(5)s(2)U34, followed by the transfer of a methyl group from S-adenosyl-L-methionine to nm(5)s(2)U34, to form mnm(5)s(2)U34. The protein is tRNA 5-methylaminomethyl-2-thiouridine biosynthesis bifunctional protein MnmC of Shewanella putrefaciens (strain CN-32 / ATCC BAA-453).